Consider the following 390-residue polypeptide: MSNTWKIYILAIVSFLVGTSEYIISGILDQIAHTLGITLAAAGQLITIFSLVYALSTPVLMALTASMDRRKLMMYALGLFVFGNVLAFVLPGYGWFIAARIIMAMGAGVVVVTALTIAAKIASEGKQGSAIATVVMGFTASLIIGVPLGRMIAVALGWKSVFGAIALLGLIAMVVIFFTLPYTEGDKPVPLLQQLALFKKRKVAMGLSITFFWLGGYSVAYTYLSPYLLNISGINGKLLSGVLLIFGIASLVGSKFGGYSTDKWGVPFTLVGGMTLHIVTLILLSLVTHSYIGVLVILILWSFAAWSTGPTQQFHLATIEPEMSGVLLSMNQSMMQFAMAVGAGIGGVFVENVSLASITWVGALGVMIAIIASLLIFNSQPKQALKDINQ.

11 helical membrane-spanning segments follow: residues 7–27 (IYIL…ISGI), 35–55 (LGIT…VYAL), 77–97 (LGLF…GWFI), 101–121 (IIMA…AAKI), 128–148 (GSAI…GVPL), 161–181 (VFGA…FTLP), 203–223 (VAMG…AYTY), 238–258 (LLSG…KFGG), 281–301 (LILL…LILW), 335–355 (MQFA…NVSL), and 357–377 (SITW…LLIF).

The protein belongs to the major facilitator superfamily.

It localises to the cell membrane. This is an uncharacterized protein from Bacillus subtilis (strain 168).